The sequence spans 616 residues: Dihydroxy-acid dehydratase (616 aa).

Asp-81 is a Mg(2+) binding site. Cys-122 provides a ligand contact to [2Fe-2S] cluster. Mg(2+)-binding residues include Asp-123 and Lys-124. At Lys-124 the chain carries N6-carboxylysine. Position 195 (Cys-195) interacts with [2Fe-2S] cluster. Glu-491 is a binding site for Mg(2+). The Proton acceptor role is filled by Ser-517.

It belongs to the IlvD/Edd family. In terms of assembly, homodimer. It depends on [2Fe-2S] cluster as a cofactor. Mg(2+) is required as a cofactor.

The enzyme catalyses (2R)-2,3-dihydroxy-3-methylbutanoate = 3-methyl-2-oxobutanoate + H2O. It carries out the reaction (2R,3R)-2,3-dihydroxy-3-methylpentanoate = (S)-3-methyl-2-oxopentanoate + H2O. Its pathway is amino-acid biosynthesis; L-isoleucine biosynthesis; L-isoleucine from 2-oxobutanoate: step 3/4. It functions in the pathway amino-acid biosynthesis; L-valine biosynthesis; L-valine from pyruvate: step 3/4. Functionally, functions in the biosynthesis of branched-chain amino acids. Catalyzes the dehydration of (2R,3R)-2,3-dihydroxy-3-methylpentanoate (2,3-dihydroxy-3-methylvalerate) into 2-oxo-3-methylpentanoate (2-oxo-3-methylvalerate) and of (2R)-2,3-dihydroxy-3-methylbutanoate (2,3-dihydroxyisovalerate) into 2-oxo-3-methylbutanoate (2-oxoisovalerate), the penultimate precursor to L-isoleucine and L-valine, respectively. In Escherichia coli (strain K12 / MC4100 / BW2952), this protein is Dihydroxy-acid dehydratase.